Here is a 297-residue protein sequence, read N- to C-terminus: N-acetylneuraminate lyase (297 aa).

Aceneuramate-binding residues include serine 47 and threonine 48. The active-site Proton donor is the tyrosine 137. Lysine 165 serves as the catalytic Schiff-base intermediate with substrate. The aceneuramate site is built by threonine 167, glycine 189, aspartate 191, glutamate 192, and serine 208.

Belongs to the DapA family. NanA subfamily. Homotetramer.

Its subcellular location is the cytoplasm. The catalysed reaction is aceneuramate = aldehydo-N-acetyl-D-mannosamine + pyruvate. It participates in amino-sugar metabolism; N-acetylneuraminate degradation; D-fructose 6-phosphate from N-acetylneuraminate: step 1/5. Its function is as follows. Catalyzes the reversible aldol cleavage of N-acetylneuraminic acid (sialic acid; Neu5Ac) to form pyruvate and N-acetylmannosamine (ManNAc) via a Schiff base intermediate. The polypeptide is N-acetylneuraminate lyase (Escherichia coli O139:H28 (strain E24377A / ETEC)).